The primary structure comprises 103 residues: Histone H4 (103 aa).

The segment covering 1 to 14 has biased composition (gly residues); the sequence is MSGRGKGGKGLGKG. Residues 1-20 form a disordered region; that stretch reads MSGRGKGGKGLGKGGAKRHR. The residue at position 2 (serine 2) is an N-acetylserine. N6-acetyl-N6-methyllysine; alternate is present on residues lysine 6 and lysine 13. Residue lysine 17 is modified to N6-acetyllysine. Residues 17 to 21 mediate DNA binding; that stretch reads KRHRR.

This sequence belongs to the histone H4 family. In terms of assembly, the nucleosome is a histone octamer containing two molecules each of H2A, H2B, H3 and H4 assembled in one H3-H4 heterotetramer and two H2A-H2B heterodimers. The octamer wraps approximately 147 bp of DNA.

The protein localises to the nucleus. The protein resides in the chromosome. In terms of biological role, core component of nucleosome. Nucleosomes wrap and compact DNA into chromatin, limiting DNA accessibility to the cellular machineries which require DNA as a template. Histones thereby play a central role in transcription regulation, DNA repair, DNA replication and chromosomal stability. DNA accessibility is regulated via a complex set of post-translational modifications of histones, also called histone code, and nucleosome remodeling. The chain is Histone H4 from Mytilus chilensis (Chilean blue mussel).